Here is a 262-residue protein sequence, read N- to C-terminus: Cerebellar degeneration-related antigen 1 (262 aa).

34 repeat units span residues 3–8 (WLEDVD), 9–14 (FLEDVP), 15–20 (LLEDIP), 21–26 (LLEDVP), 27–32 (LLEDVP), 33–38 (LLEDTS), 39–44 (RLEDIN), 45–50 (LMEDMA), 51–56 (LLEDVD), 57–62 (LLEDTD), 63–68 (FLEDLD), 69–74 (FSEAMD), 75–80 (LREDKD), 81–86 (FLEDMD), 87–92 (SLEDMA), 93–98 (LLEDVD), 99–104 (LLEDTD), 105–110 (FLEDPD), 111–116 (FLEAID), 117–122 (LREDKD), 123–128 (FLEDMD), 129–134 (SLEDLE), 135–140 (AIGRCG), 141–146 (FSGRHG), 147–152 (FFGRRR), 153–158 (FSGRPK), 159–164 (LSGRLG), 165–170 (LLGRRG), 171–176 (FSGRLG), 177–182 (GYWKTW), 183–188 (IFWKTW), 189–194 (IFWKTW), 195–200 (IFRKTY), and 201–206 (IGWKTW). The interval 3 to 140 (WLEDVDFLED…EDLEAIGRCG (138 aa)) is 23 X 6 AA approximate repeats. Residues 141-176 (FSGRHGFFGRRRFSGRPKLSGRLGLLGRRGFSGRLG) form a 6 X 6 AA approximate repeats region. Positions 177-206 (GYWKTWIFWKTWIFWKTWIFRKTYIGWKTW) are 5 X 6 AA approximate repeats.

In terms of tissue distribution, brain; predominantly expressed in normal neuroectodermal tissues and in certain malignant tumors.

This is Cerebellar degeneration-related antigen 1 (CDR1) from Homo sapiens (Human).